Reading from the N-terminus, the 391-residue chain is Elongation factor Tu (391 aa).

The tr-type G domain maps to K10–E201. The G1 stretch occupies residues G19–T26. Position 19–26 (G19–T26) interacts with GTP. T26 is a Mg(2+) binding site. Positions G55–S59 are G2. The tract at residues D76–G79 is G3. Residues D76 to H80 and N131 to D134 each bind GTP. Positions N131–D134 are G4. Residues S169–L171 are G5.

This sequence belongs to the TRAFAC class translation factor GTPase superfamily. Classic translation factor GTPase family. EF-Tu/EF-1A subfamily. Monomer.

It is found in the cytoplasm. It carries out the reaction GTP + H2O = GDP + phosphate + H(+). Its function is as follows. GTP hydrolase that promotes the GTP-dependent binding of aminoacyl-tRNA to the A-site of ribosomes during protein biosynthesis. The chain is Elongation factor Tu from Chelativorans sp. (strain BNC1).